Here is a 598-residue protein sequence, read N- to C-terminus: Rho-related protein racA (598 aa).

Residue 11–17 (DGAVGKS) participates in GTP binding. Positions 32 to 40 (YVPTVFDNY) match the Effector region motif. GTP is bound by residues 57 to 61 (DTAGQ) and 115 to 118 (TKND). A disordered region spans residues 175 to 210 (ASAKKKGGFFSSSSSSSSSSSSKSSEKSVPIPPVMP). Over residues 182–197 (GFFSSSSSSSSSSSSK) the composition is skewed to low complexity. 2 consecutive BTB domains span residues 239 to 344 (SDVK…NYLD) and 405 to 472 (SDIQ…PIEE).

The protein in the N-terminal section; belongs to the small GTPase superfamily. Rho family. Interacts with pakB.

The chain is Rho-related protein racA (racA) from Dictyostelium discoideum (Social amoeba).